Here is a 495-residue protein sequence, read N- to C-terminus: ATP synthase subunit beta, chloroplastic (495 aa).

172 to 179 (GGAGVGKT) contacts ATP.

The protein belongs to the ATPase alpha/beta chains family. As to quaternary structure, F-type ATPases have 2 components, CF(1) - the catalytic core - and CF(0) - the membrane proton channel. CF(1) has five subunits: alpha(3), beta(3), gamma(1), delta(1), epsilon(1). CF(0) has four main subunits: a(1), b(1), b'(1) and c(9-12).

It is found in the plastid. Its subcellular location is the chloroplast thylakoid membrane. It carries out the reaction ATP + H2O + 4 H(+)(in) = ADP + phosphate + 5 H(+)(out). In terms of biological role, produces ATP from ADP in the presence of a proton gradient across the membrane. The catalytic sites are hosted primarily by the beta subunits. The sequence is that of ATP synthase subunit beta, chloroplastic from Brimeura amethystina (Spanish hyacinth).